Consider the following 205-residue polypeptide: Probable GTP-binding protein EngB (205 aa).

An EngB-type G domain is found at 22–194 (ELPEIAFAGR…WESILDLCEI (173 aa)). Residues 30–37 (GRSNVGKS), 57–61 (GRTQL), 75–78 (DLPG), 142–145 (TKAD), and 173–175 (FSA) contribute to the GTP site. Positions 37 and 59 each coordinate Mg(2+).

Belongs to the TRAFAC class TrmE-Era-EngA-EngB-Septin-like GTPase superfamily. EngB GTPase family. Requires Mg(2+) as cofactor.

Its function is as follows. Necessary for normal cell division and for the maintenance of normal septation. The chain is Probable GTP-binding protein EngB from Desulfatibacillum aliphaticivorans.